The chain runs to 285 residues: Transmembrane protein 53-A (285 aa).

Residues Phe-165–Leu-185 form a helical membrane-spanning segment.

The protein belongs to the TMEM53 family.

Its subcellular location is the nucleus outer membrane. Its function is as follows. Ensures normal bone formation, through the negative regulation of bone morphogenetic protein (BMP) signaling in osteoblast lineage cells by blocking cytoplasm-nucleus translocation of phosphorylated SMAD proteins. In Xenopus laevis (African clawed frog), this protein is Transmembrane protein 53-A (tmem53-a).